The primary structure comprises 203 residues: Cell division protein SepF (203 aa).

2 disordered regions span residues 26 to 51 (DGEL…RRGQ) and 167 to 203 (GTAS…WRNQ). Composition is skewed to basic and acidic residues over residues 39–50 (EPPRRSAPERRG) and 183–203 (RRSE…WRNQ).

The protein belongs to the SepF family. In terms of assembly, homodimer. Interacts with FtsZ.

Its subcellular location is the cytoplasm. In terms of biological role, cell division protein that is part of the divisome complex and is recruited early to the Z-ring. Probably stimulates Z-ring formation, perhaps through the cross-linking of FtsZ protofilaments. Its function overlaps with FtsA. This Symbiobacterium thermophilum (strain DSM 24528 / JCM 14929 / IAM 14863 / T) protein is Cell division protein SepF.